We begin with the raw amino-acid sequence, 178 residues long: Inorganic pyrophosphatase (178 aa).

The substrate site is built by lysine 30, arginine 44, and tyrosine 56. The Mg(2+) site is built by aspartate 66, aspartate 71, and aspartate 103. Tyrosine 140 is a binding site for substrate.

This sequence belongs to the PPase family. Homohexamer. Requires Mg(2+) as cofactor.

Its subcellular location is the cytoplasm. The enzyme catalyses diphosphate + H2O = 2 phosphate + H(+). Catalyzes the hydrolysis of inorganic pyrophosphate (PPi) forming two phosphate ions. This chain is Inorganic pyrophosphatase, found in Thermococcus kodakarensis (strain ATCC BAA-918 / JCM 12380 / KOD1) (Pyrococcus kodakaraensis (strain KOD1)).